Consider the following 150-residue polypeptide: Large ribosomal subunit protein bL9 (150 aa).

This sequence belongs to the bacterial ribosomal protein bL9 family.

Its function is as follows. Binds to the 23S rRNA. The protein is Large ribosomal subunit protein bL9 of Vibrio atlanticus (strain LGP32) (Vibrio splendidus (strain Mel32)).